Consider the following 566-residue polypeptide: Proline--tRNA ligase (566 aa).

This sequence belongs to the class-II aminoacyl-tRNA synthetase family. ProS type 1 subfamily. In terms of assembly, homodimer.

The protein localises to the cytoplasm. It catalyses the reaction tRNA(Pro) + L-proline + ATP = L-prolyl-tRNA(Pro) + AMP + diphosphate. Functionally, catalyzes the attachment of proline to tRNA(Pro) in a two-step reaction: proline is first activated by ATP to form Pro-AMP and then transferred to the acceptor end of tRNA(Pro). As ProRS can inadvertently accommodate and process non-cognate amino acids such as alanine and cysteine, to avoid such errors it has two additional distinct editing activities against alanine. One activity is designated as 'pretransfer' editing and involves the tRNA(Pro)-independent hydrolysis of activated Ala-AMP. The other activity is designated 'posttransfer' editing and involves deacylation of mischarged Ala-tRNA(Pro). The misacylated Cys-tRNA(Pro) is not edited by ProRS. This chain is Proline--tRNA ligase, found in Bacillus cytotoxicus (strain DSM 22905 / CIP 110041 / 391-98 / NVH 391-98).